Here is a 56-residue protein sequence, read N- to C-terminus: HLRNHSGWKPFRCDKCDYQCVNKSMLNSHLKSHSNIYQYRCADCTYATKYCHSLKL.

C2H2-type zinc fingers lie at residues 1 to 5 (HLRNH), 11 to 33 (FRCDKCDYQCVNKSMLNSHLKSH), and 39 to 56 (YRCADCTYATKYCHSLKL).

Belongs to the hunchback C2H2-type zinc-finger protein family.

Its subcellular location is the nucleus. Functionally, gap class segmentation protein that controls development of head structures. The sequence is that of Protein hunchback (hb) from Locusta migratoria (Migratory locust).